A 311-amino-acid polypeptide reads, in one-letter code: tRNA N6-adenosine threonylcarbamoyltransferase (311 aa).

His-108 and His-112 together coordinate Fe cation. Substrate-binding positions include 130-134 (LVSGG), Asp-163, Gly-176, Asp-180, and Asn-270. Asp-294 lines the Fe cation pocket.

The protein belongs to the KAE1 / TsaD family. Requires Fe(2+) as cofactor.

Its subcellular location is the cytoplasm. The enzyme catalyses L-threonylcarbamoyladenylate + adenosine(37) in tRNA = N(6)-L-threonylcarbamoyladenosine(37) in tRNA + AMP + H(+). Required for the formation of a threonylcarbamoyl group on adenosine at position 37 (t(6)A37) in tRNAs that read codons beginning with adenine. Is involved in the transfer of the threonylcarbamoyl moiety of threonylcarbamoyl-AMP (TC-AMP) to the N6 group of A37, together with TsaE and TsaB. TsaD likely plays a direct catalytic role in this reaction. This is tRNA N6-adenosine threonylcarbamoyltransferase from Metamycoplasma arthritidis (strain 158L3-1) (Mycoplasma arthritidis).